Reading from the N-terminus, the 352-residue chain is Putative killer cell immunoglobulin-like receptor-like protein KIR3DX1 (352 aa).

The signal sequence occupies residues 1-16; sequence MAPKLITVLCLGFCLN. 2 consecutive Ig-like C2-type domains span residues 17–112 and 224–311; these read QKIC…NSLK and PSLS…VTRC. 2 disulfides stabilise this stretch: Cys-49–Cys-94 and Cys-244–Cys-295. The N-linked (GlcNAc...) asparagine glycan is linked to Asn-78.

As to expression, expressed in NK-cells.

Its subcellular location is the secreted. The chain is Putative killer cell immunoglobulin-like receptor-like protein KIR3DX1 (KIR3DX1) from Homo sapiens (Human).